The following is a 226-amino-acid chain: Probable functional amyloid protease FapD (226 aa).

The signal sequence occupies residues 1–18 (MRTLILSLLLLVDLTTQA). The 131-residue stretch at 50–180 (QKTDFSCGAA…KGWNGIVFAV (131 aa)) folds into the Peptidase C39 domain. Cys-56 is an active-site residue.

It belongs to the FapD family.

Its subcellular location is the periplasm. Functionally, probable protease that might be involved in processing fibril precursors. Upon overexpression of the endogenous six-gene locus (fapA-fapF), cells form large clumps during liquid growth, make large amounts of biofilm and produce amyloid fibrils. This Pseudomonas aeruginosa (strain ATCC 15692 / DSM 22644 / CIP 104116 / JCM 14847 / LMG 12228 / 1C / PRS 101 / PAO1) protein is Probable functional amyloid protease FapD.